Consider the following 460-residue polypeptide: Angiopoietin-related protein 3 (460 aa).

A signal peptide spans 1–16 (MFTIKLLLFIVPLVIS). Residues 17–165 (SRIDQDNSSF…PEHPEVTSLK (149 aa)) are sufficient to inhibit LPL lipase activity. The sufficient to inhibit LIPG/EL phospholipase activity stretch occupies residues 17–207 (SRIDQDNSSF…EIENQLRRTS (191 aa)). The required for inhibition of LPL lipase activity stretch occupies residues 32 to 56 (EPKSRFAMLDDVKILANGLLQLGHG). The stretch at 85–210 (LSLQTSEIKE…NQLRRTSIQE (126 aa)) forms a coiled coil. Asn-115 carries N-linked (GlcNAc...) asparagine glycosylation. An O-linked (GalNAc) threonine glycan is attached at Thr-226. The Fibrinogen C-terminal domain occupies 237 to 455 (VKHDGIPAEC…STKMLIHPTD (219 aa)). Residues Cys-246 and Cys-274 are joined by a disulfide bond. N-linked (GlcNAc...) asparagine glycans are attached at residues Asn-296 and Asn-357. Residues Cys-394 and Cys-408 are joined by a disulfide bond.

Interacts with ANGPTL8. Interacts with ITGB3. Post-translationally, O-glycosylated at Thr-226 by GALNT2; blocks processing and activation by proprotein convertases. In terms of processing, in part proteolytically cleaved by proprotein convertases; proposed to be involved in activation. In terms of tissue distribution, expressed principally in liver. Weakly expressed in kidney. Binds to adipocytes. Increased expression and colocalization with activated ITGB3 in glomeruli of patients with nephrotic syndrome showing effaced podocyte foot processes (at protein level).

It localises to the secreted. It is found in the cell projection. Its subcellular location is the lamellipodium. In terms of biological role, acts in part as a hepatokine that is involved in regulation of lipid and glucose metabolism. Proposed to play a role in the trafficking of energy substrates to either storage or oxidative tissues in response to food intake. Has a stimulatory effect on plasma triglycerides (TG), which is achieved by suppressing plasma TG clearance via inhibition of LPL activity. The inhibition of LPL activity appears to be an indirect mechanism involving recruitment of proprotein convertases PCSK6 and FURIN to LPL leading to cleavage and dissociation of LPL from the cell surface; the function does not require ANGPTL3 proteolytic cleavage but seems to be mediated by the N-terminal domain, and is not inhibited by GPIHBP1. Can inhibit endothelial lipase, causing increased plasma levels of high density lipoprotein (HDL) cholesterol and phospholipids. Can bind to adipocytes to activate lipolysis, releasing free fatty acids and glycerol. Suppresses LPL specifically in oxidative tissues which is required to route very low density lipoprotein (VLDL)-TG to white adipose tissue (WAT) for storage in response to food; the function may involve cooperation with circulating, liver-derived ANGPTL8 and ANGPTL4 expression in WAT. Contributes to lower plasma levels of low density lipoprotein (LDL)-cholesterol by a mechanism that is independent of the canonical pathway implicating APOE and LDLR. May stimulate hypothalamic LPL activity. Functionally, in vitro inhibits LPL activity; not effective on GPIHBP1-stabilized LPL. Its function is as follows. Involved in angiogenesis. Binds to endothelial cells via integrin alpha-V/beta-3 (ITGAV:ITGB3), activates FAK, MAPK and Akt signaling pathways and induces cell adhesion and cell migration. Secreted from podocytes, may modulate properties of glomerular endothelial cells involving integrin alpha-V/beta-3 and Akt signaling. May increase the motility of podocytes. May induce actin filament rearrangements in podocytes implicating integrin alpha-V/beta-3 and Rac1 activation. Binds to hematopoietic stem cells (HSC) and is involved in the regulation of HSC activity probably implicating down-regulation of IKZF1/IKAROS. This chain is Angiopoietin-related protein 3 (ANGPTL3), found in Homo sapiens (Human).